Consider the following 479-residue polypeptide: Poly(A) polymerase catalytic subunit (479 aa).

Residues Asp-202 and Asp-204 contribute to the active site. Ca(2+)-binding residues include Asp-202, Asp-204, and Asp-253.

This sequence belongs to the poxviridae poly(A) polymerase catalytic subunit family. As to quaternary structure, heterodimer of a large (catalytic) subunit and a small (regulatory) subunit.

The catalysed reaction is RNA(n) + ATP = RNA(n)-3'-adenine ribonucleotide + diphosphate. In terms of biological role, polymerase that creates the 3'-poly(A) tail of mRNA's. The sequence is that of Poly(A) polymerase catalytic subunit (OPG063) from Cynomys gunnisoni (Gunnison's prairie dog).